A 44-amino-acid polypeptide reads, in one-letter code: Thymosin beta-4, Y-chromosomal (44 aa).

The segment at 1-44 (MSDKPGMAEIEKFDKSKLKKTETQEKNPLSSKETIEQERQAGES) is disordered. 2 stretches are compositionally biased toward basic and acidic residues: residues 9-25 (EIEKFDKSKLKKTETQE) and 33-44 (ETIEQERQAGES).

Belongs to the thymosin beta family. In terms of tissue distribution, ubiquitous.

It is found in the cytoplasm. Its subcellular location is the cytoskeleton. Its function is as follows. Plays an important role in the organization of the cytoskeleton. Binds to and sequesters actin monomers (G actin) and therefore inhibits actin polymerization. The chain is Thymosin beta-4, Y-chromosomal (TMSB4Y) from Homo sapiens (Human).